We begin with the raw amino-acid sequence, 275 residues long: Phosphatidylglycerol--prolipoprotein diacylglyceryl transferase (275 aa).

The next 7 membrane-spanning stretches (helical) occupy residues 22 to 42 (LSVR…MWLA), 61 to 81 (LLFY…VLFY), 96 to 116 (IWTG…AMIW), 125 to 145 (FFTV…VGRI), 177 to 197 (SQLY…NLFW), 204 to 224 (GAIS…VEFV), and 238 to 258 (ISMG…MVWA). Position 144 (arginine 144) interacts with a 1,2-diacyl-sn-glycero-3-phospho-(1'-sn-glycerol).

Belongs to the Lgt family.

The protein resides in the cell inner membrane. It catalyses the reaction L-cysteinyl-[prolipoprotein] + a 1,2-diacyl-sn-glycero-3-phospho-(1'-sn-glycerol) = an S-1,2-diacyl-sn-glyceryl-L-cysteinyl-[prolipoprotein] + sn-glycerol 1-phosphate + H(+). The protein operates within protein modification; lipoprotein biosynthesis (diacylglyceryl transfer). Catalyzes the transfer of the diacylglyceryl group from phosphatidylglycerol to the sulfhydryl group of the N-terminal cysteine of a prolipoprotein, the first step in the formation of mature lipoproteins. The polypeptide is Phosphatidylglycerol--prolipoprotein diacylglyceryl transferase (Aeromonas salmonicida (strain A449)).